The primary structure comprises 153 residues: Transcriptional repressor NrdR (153 aa).

Residues 1-20 form a disordered region; sequence MKCPFCNSADTRVKNSRHSD. Residues 3-34 fold into a zinc finger; sequence CPFCNSADTRVKNSRHSDDNMSVRRRRLCEVC. A compositionally biased stretch (basic and acidic residues) spans 11-20; that stretch reads TRVKNSRHSD. Positions 49-139 constitute an ATP-cone domain; the sequence is IMVLKKDGRM…VYMDFSDADD (91 aa).

It belongs to the NrdR family. Zn(2+) is required as a cofactor.

Negatively regulates transcription of bacterial ribonucleotide reductase nrd genes and operons by binding to NrdR-boxes. The sequence is that of Transcriptional repressor NrdR from Anaplasma phagocytophilum (strain HZ).